The following is a 505-amino-acid chain: Peroxisome proliferator-activated receptor gamma (505 aa).

An O-linked (GlcNAc) threonine glycan is attached at T84. S112 is subject to Phosphoserine; by MAPK. Residues 136-210 (AIECRVCGDK…VGMSHNAIRF (75 aa)) constitute a DNA-binding region (nuclear receptor). 2 NR C4-type zinc fingers span residues 139–159 (CRVC…CEGC) and 176–198 (CDLN…FQKC). Residues 205-280 (HNAIRFGRMP…DKSPFVIYDM (76 aa)) form an interaction with FAM120B region. One can recognise an NR LBD domain in the interval 238 to 503 (DLRALAKHLY…HPLLQEIYKD (266 aa)). Residue K252 forms a Glycyl lysine isopeptide (Lys-Gly) (interchain with G-Cter in ubiquitin) linkage. Positions 495–503 (PLLQEIYKD) match the 9aaTAD motif.

This sequence belongs to the nuclear hormone receptor family. NR1 subfamily. Interacts with FOXO1 (acetylated form). Heterodimer with other nuclear receptors, such as RXRA. The heterodimer with the retinoic acid receptor RXRA is called adipocyte-specific transcription factor ARF6. Interacts with NCOA6 coactivator, leading to a strong increase in transcription of target genes. Interacts with coactivator PPARBP, leading to a mild increase in transcription of target genes. Interacts with NOCA7 in a ligand-inducible manner. Interacts with NCOA1 and NCOA2 LXXLL motifs. Interacts with ASXL1, ASXL2, DNTTIP2, FAM120B, MAP2K1/MEK1, NR0B2, PDPK1, PRDM16, PRMT2 and TGFB1I1. Interacts (when activated by agonist) with PPP5C. Interacts with HELZ2 and THRAP3; the interaction stimulates the transcriptional activity of PPARG. Interacts with PER2, the interaction is ligand dependent and blocks PPARG recruitment to target promoters. Interacts with NOCT. Interacts with ACTN4. Interacts (when in the liganded conformation) with GPS2. Interacts with CRY1 and CRY2 in a ligand-dependent manner. In the absence of hormonal ligand, interacts with TACC1. In macrophages, interacts with PAQR3 and STUB1; the interactions promote PPARG poylubiquitination and STUB1-mediated degradation. O-GlcNAcylation at Thr-84 reduces transcriptional activity in adipocytes. In terms of processing, phosphorylated at basal conditions and dephosphorylated when treated with the ligand. May be dephosphorylated by PPP5C. The phosphorylated form may be inactive and dephosphorylation induces adipogenic activity. Post-translationally, ubiquitinated by E3 ubiquitin-protein ligase complex containing FBXO9; leading to proteasomal degradation. Ubiquitinated at Lys-252 by TRIM55 leading to proteasomal degradation. Ubiquitinated by E3 ubiquitin-protein ligase STUB1/CHIP; leading to proteasomal degradation. In terms of tissue distribution, highest expression in adipose tissue. Lower in liver, heart, kidney, stomach, duodenum and colon.

The protein localises to the nucleus. Its subcellular location is the cytoplasm. With respect to regulation, PDPK1 activates its transcriptional activity independently of its kinase activity. Nuclear receptor that binds peroxisome proliferators such as hypolipidemic drugs and fatty acids. Once activated by a ligand, the nuclear receptor binds to DNA specific PPAR response elements (PPRE) and modulates the transcription of its target genes, such as acyl-CoA oxidase. It therefore controls the peroxisomal beta-oxidation pathway of fatty acids. Key regulator of adipocyte differentiation and glucose homeostasis. ARF6 acts as a key regulator of the tissue-specific adipocyte P2 (aP2) enhancer. Acts as a critical regulator of gut homeostasis by suppressing NF-kappa-B-mediated pro-inflammatory responses. Plays a role in the regulation of cardiovascular circadian rhythms by regulating the transcription of BMAL1 in the blood vessels. The protein is Peroxisome proliferator-activated receptor gamma (PPARG) of Macaca mulatta (Rhesus macaque).